The sequence spans 369 residues: RNA pseudouridine synthase 5 (369 aa).

One can recognise an S4 RNA-binding domain in the interval 47–104; that stretch reads APLLGWIQRIQNGQIQIDGEVVKDPNTLLRSGSKLVYSRLPWKEPDTPYSLEVLYEDD.

This sequence belongs to the pseudouridine synthase RluA family.

The catalysed reaction is a uridine in RNA = a pseudouridine in RNA. This chain is RNA pseudouridine synthase 5, found in Arabidopsis thaliana (Mouse-ear cress).